A 67-amino-acid polypeptide reads, in one-letter code: Cold shock protein ScoF (67 aa).

In terms of domain architecture, CSD spans 4–64 (GTVKWFNSEK…GQKGPQAENI (61 aa)).

It localises to the cytoplasm. In Streptomyces coelicolor (strain ATCC BAA-471 / A3(2) / M145), this protein is Cold shock protein ScoF (scoF).